The sequence spans 185 residues: MLLKLILILCFLVTLSLSVKVDSADPALFTQGPTIASGGTGNTGANPCYGHDDEDGSKDPAMFTQGPVSSGSGSGSGGYCPHHKNRAQEGGKKDTTKEQPKENNNNKNLGRHSSSGSGSGSGSGCGVTGDTGTGSGRTTAPVNDGVTYKSSNVKETEQYRGGAGRGKHNQATEENVQDCGEITGW.

Residues 1–18 (MLLKLILILCFLVTLSLS) form the signal peptide. The segment at 30-185 (TQGPTIASGG…VQDCGEITGW (156 aa)) is disordered. The span at 86–101 (RAQEGGKKDTTKEQPK) shows a compositional bias: basic and acidic residues. The span at 103-116 (NNNNKNLGRHSSSG) shows a compositional bias: low complexity. The segment covering 117-135 (SGSGSGSGCGVTGDTGTGS) has biased composition (gly residues).

The protein resides in the secreted. This is an uncharacterized protein from Dictyostelium discoideum (Social amoeba).